The primary structure comprises 312 residues: tRNA uridine(34) hydroxylase (312 aa).

The 95-residue stretch at 123 to 217 folds into the Rhodanese domain; sequence SDPEVLLIDT…YLEEVPQEQS (95 aa). Cys177 serves as the catalytic Cysteine persulfide intermediate. Positions 282-293 are enriched in basic and acidic residues; sequence ARERQKQIELAR. Residues 282-312 are disordered; it reads ARERQKQIELARQRNQPHPLGRDPRQSTLEN.

It belongs to the TrhO family.

It carries out the reaction uridine(34) in tRNA + AH2 + O2 = 5-hydroxyuridine(34) in tRNA + A + H2O. In terms of biological role, catalyzes oxygen-dependent 5-hydroxyuridine (ho5U) modification at position 34 in tRNAs. This is tRNA uridine(34) hydroxylase from Pseudomonas paraeruginosa (strain DSM 24068 / PA7) (Pseudomonas aeruginosa (strain PA7)).